A 381-amino-acid chain; its full sequence is Ceramide-binding protein svf-1 (381 aa).

The interval 1–18 is peripherally associates with membranes; the sequence is MFKWAQAALANVAGTKEP.

Belongs to the SVF1 family.

It is found in the golgi apparatus. The protein localises to the cis-Golgi network membrane. It localises to the endoplasmic reticulum membrane. The protein resides in the cytoplasm. Its subcellular location is the nucleus. Ceramide-binding protein that may transfer ceramides from the endoplasmic reticulum membrane to the cis-Golgi network membrane, and is thereby required for the biosynthesis of complex sphingolipids. This is Ceramide-binding protein svf-1 (svf-1) from Neurospora crassa (strain ATCC 24698 / 74-OR23-1A / CBS 708.71 / DSM 1257 / FGSC 987).